A 420-amino-acid chain; its full sequence is 4-hydroxy-3-methylbut-2-en-1-yl diphosphate synthase (flavodoxin) (420 aa).

[4Fe-4S] cluster is bound by residues C307, C310, C353, and E360.

The protein belongs to the IspG family. Requires [4Fe-4S] cluster as cofactor.

The catalysed reaction is (2E)-4-hydroxy-3-methylbut-2-enyl diphosphate + oxidized [flavodoxin] + H2O + 2 H(+) = 2-C-methyl-D-erythritol 2,4-cyclic diphosphate + reduced [flavodoxin]. The protein operates within isoprenoid biosynthesis; isopentenyl diphosphate biosynthesis via DXP pathway; isopentenyl diphosphate from 1-deoxy-D-xylulose 5-phosphate: step 5/6. Converts 2C-methyl-D-erythritol 2,4-cyclodiphosphate (ME-2,4cPP) into 1-hydroxy-2-methyl-2-(E)-butenyl 4-diphosphate. The protein is 4-hydroxy-3-methylbut-2-en-1-yl diphosphate synthase (flavodoxin) of Brucella abortus (strain S19).